Consider the following 6874-residue polypeptide: Nesprin-2 (6874 aa).

An actin-binding region spans residues 1–286 (MAASPVLPTE…MTYVAQFLKY (286 aa)). At 1-6823 (MAASPVLPTE…RRSFLSRVIR (6823 aa)) the chain is on the cytoplasmic side. 2 Calponin-homology (CH) domains span residues 31 to 136 (DTQK…LHFH) and 183 to 288 (WSAK…KYSK). Spectrin repeat units follow at residues 299-380 (AKVR…HQVA), 381-474 (AWRA…RINN), 475-577 (VLGK…QYIH), and 578-680 (NTKA…IQDQ). Residues 299-6767 (AKVRDALVWL…PDASLTSFDE (6469 aa)) adopt a coiled-coil conformation. Residues 675–723 (VKIQDQPPGNSSGTSLSKESAMAAEPGGSRGEDVKAAEKQEVEDEESAG) are disordered. Over residues 681 to 692 (PPGNSSGTSLSK) the composition is skewed to polar residues. The span at 704–714 (RGEDVKAAEKQ) shows a compositional bias: basic and acidic residues. 31 Spectrin repeats span residues 727–834 (VNEE…KNLS), 835–928 (DEPL…LRHE), 929–1030 (ISLY…KCAS), 1120–1211 (TQRG…LLNT), 1262–1322 (DIRD…DALD), 1323–1409 (ALEG…QSKE), 1410–1514 (EGPP…ASVT), 1515–1626 (ESLE…KTEE), 1627–1728 (YGEN…AGGS), 1729–1820 (NSYA…TKKN), 1821–1928 (ALQD…AGEL), 1929–2026 (NNSF…EEED), 2027–2122 (KLPA…LANT), 2123–2233 (YLSH…SVQK), 2234–2350 (LEGH…LNSI), 2422–2503 (DERE…TLKK), 2504–2610 (TKER…KCFQ), 2611–2707 (QATE…EALE), 2708–2821 (PLNR…QLEL), 2822–2923 (KLEE…FLQN), 2924–3027 (NGSE…GKIK), 3028–3133 (QLDT…NMLL), 3134–3239 (ELQP…SLRA), 3240–3343 (DVLN…AQEA), 3344–3456 (EEER…QWGG), 3457–3563 (ELKR…TTRK), 3564–3669 (NKDL…SSEV), 3670–3767 (SKSS…ESRT), 3768–3870 (SQLN…QIME), 3871–3976 (ALPH…VTQE), and 3977–4074 (QNEL…KPSA). A disordered region spans residues 2338–2397 (SAKQETENGLNSILKSKSSTEKHVKFSLPVEEMPATSEVPKPTRESAAVGESGGARETNT). A compositionally biased stretch (polar residues) spans 2344-2354 (ENGLNSILKSK). Disordered regions lie at residues 4062-4152 (KQEQ…ATIV), 4171-4193 (APDS…TDEG), 4326-4348 (FSED…DQPA), and 4401-4429 (HQEN…DSTL). The segment covering 4081–4091 (VAERDASERKL) has biased composition (basic and acidic residues). Serine 4096 carries the phosphoserine modification. Over residues 4110–4122 (SSVKSEDGRRRTE) the composition is skewed to basic and acidic residues. The stretch at 4218–4337 (RSRPRPADIL…EDQHPSTLKK (120 aa)) is one Spectrin 36 repeat. A compositionally biased stretch (basic and acidic residues) spans 4326–4345 (FSEDQHPSTLKKPSEPHDVD). The segment covering 4409 to 4429 (RQSASSSKVPSPGNAASDSTL) has biased composition (polar residues). 17 Spectrin repeats span residues 4507 to 4626 (SMTE…RSYQ), 4627 to 4714 (NEVK…RARY), 4715 to 4823 (LELS…QSML), 4824 to 4929 (QKWE…QTLL), 4930 to 5037 (KHLL…QEKL), 5038 to 5150 (HQLQ…KIQH), 5151 to 5252 (LEQL…SQVH), 5253 to 5377 (QLRA…KAPH), 5378 to 5473 (NAHA…MLLA), 5474 to 5576 (KSNE…YSEL), 5577 to 5691 (QGNG…QWRF), 5692 to 5786 (FTTS…LSLG), 5787 to 5894 (EVIS…RVAI), 5895 to 6004 (RKQE…VKKL), 6005 to 6122 (KETF…EETW), 6123 to 6230 (RLWQ…LRYF), and 6231 to 6342 (TNQR…PGLD). The disordered stretch occupies residues 5435-5459 (NSTLSDQLPQPEERSTPGLHSGQRH). The residue at position 5772 (serine 5772) is a Phosphoserine. Residues 6336–6473 (SHTPGLDDEK…TEAPVPTDAS (138 aa)) are disordered. Residues 6341 to 6354 (LDDEKEASENETDI) are compositionally biased toward acidic residues. Residues serine 6348, serine 6371, serine 6400, serine 6417, serine 6418, serine 6419, and serine 6448 each carry the phosphoserine modification. The segment covering 6355–6372 (EDPREIQADSWRKRRESE) has biased composition (basic and acidic residues). Spectrin repeat units follow at residues 6450–6534 (SHSK…KLRL), 6535–6650 (KQTV…QCQD), and 6651–6767 (FHQL…SFDE). Positions 6790–6812 (EEEEEEEETDSRMPHLDSPGSSQ) are disordered. A KASH domain is found at 6815–6874 (RSFLSRVIRAALPLQLLLLLLLLLACLLPASEDDYSCTQANNFARSFYPMLRYTNGPPPT). Residues 6824–6844 (AALPLQLLLLLLLLLACLLPA) traverse the membrane as a helical; Anchor for type IV membrane protein segment. Topologically, residues 6845–6874 (SEDDYSCTQANNFARSFYPMLRYTNGPPPT) are perinuclear space. The interval 6861-6874 (FYPMLRYTNGPPPT) is sufficient for interaction with SUN2.

This sequence belongs to the nesprin family. As to quaternary structure, core component of LINC complexes which are composed of inner nuclear membrane SUN domain-containing proteins coupled to outer nuclear membrane KASH domain-containing nesprins. SUN and KASH domain-containing proteins seem to bind each other promiscuously; however, some LINC complex constituents are tissue- or cell type-specific. At least SUN1/2-containing core LINC complexes are proposed to be hexameric composed of three protomers of each KASH and SUN domain-containing protein. The SUN2:SYNE2/KASH2 complex is a heterohexamer; the homotrimeric cloverleave-like conformation of the SUN domain is a prerequisite for LINC complex formation in which three separate SYNE2/KASH2 peptides bind at the interface of adjacent SUN domains. Interacts with EMD, LMNA, MKS3 and F-actin via its N-terminal domain. Interacts with DCTN1 and DYNC1I1/2; suggesting the association with the dynein-dynactin motor complex. Associates with kinesin motor complexes. Interacts with TMEM67. Interacts (via KASH domain) with TMEM258. Interacts with BROX; this interaction promotes SYN2 ubiquitination and facilitates the relaxation of mechanical stress imposed by compressive actin fibers at the rupture site. The disulfid bond with SUN2 is required for stability of the SUN2:SYNE2/KASH2 LINC complex under tensile forces though not required for the interaction. In terms of tissue distribution, C-terminal isoforms are highly expressed in the brain, hert and skeletal muscle. Isoform 1 (Nesprin-2 Giant) is most prevalent in the brain, skin, kidney and skeletal muscle.

It is found in the nucleus outer membrane. The protein resides in the sarcoplasmic reticulum membrane. Its subcellular location is the cell membrane. The protein localises to the cytoplasm. It localises to the cytoskeleton. It is found in the mitochondrion. The protein resides in the nucleus. Its subcellular location is the nucleoplasm. Multi-isomeric modular protein which forms a linking network between organelles and the actin cytoskeleton to maintain the subcellular spatial organization. As a component of the LINC (LInker of Nucleoskeleton and Cytoskeleton) complex involved in the connection between the nuclear lamina and the cytoskeleton. The nucleocytoplasmic interactions established by the LINC complex play an important role in the transmission of mechanical forces across the nuclear envelope and in nuclear movement and positioning. Specifically, SYNE2 and SUN2 assemble in arrays of transmembrane actin-associated nuclear (TAN) lines which are bound to F-actin cables and couple the nucleus to retrograde actin flow during actin-dependent nuclear movement. May be involved in nucleus-centrosome attachment. During interkinetic nuclear migration (INM) at G2 phase and nuclear migration in neural progenitors its LINC complex association with SUN1/2 and probable association with cytoplasmic dynein-dynactin motor complexes functions to pull the nucleus toward the centrosome; SYNE1 and SYNE2 seem to act redundantly in cerebellum, midbrain, brain stem, and other brain regions except cerebral cortex and hippocampus. During INM at G1 phase mediates respective LINC complex association with kinesin to push the nucleus away from the centrosome. Involved in nuclear migration in retinal photoreceptor progenitors. Required for centrosome migration to the apical cell surface during early ciliogenesis. In Mus musculus (Mouse), this protein is Nesprin-2.